Reading from the N-terminus, the 761-residue chain is 1,4-alpha-glucan branching enzyme GlgB (761 aa).

The active-site Nucleophile is Asp-431. Glu-484 (proton donor) is an active-site residue.

This sequence belongs to the glycosyl hydrolase 13 family. GlgB subfamily. As to quaternary structure, monomer.

It catalyses the reaction Transfers a segment of a (1-&gt;4)-alpha-D-glucan chain to a primary hydroxy group in a similar glucan chain.. The protein operates within glycan biosynthesis; glycogen biosynthesis. Catalyzes the formation of the alpha-1,6-glucosidic linkages in glycogen by scission of a 1,4-alpha-linked oligosaccharide from growing alpha-1,4-glucan chains and the subsequent attachment of the oligosaccharide to the alpha-1,6 position. This is 1,4-alpha-glucan branching enzyme GlgB from Synechococcus sp. (strain WH7803).